A 330-amino-acid polypeptide reads, in one-letter code: D-cysteine desulfhydrase (330 aa).

Lys-52 is modified (N6-(pyridoxal phosphate)lysine).

This sequence belongs to the ACC deaminase/D-cysteine desulfhydrase family. Homodimer. Requires pyridoxal 5'-phosphate as cofactor.

It carries out the reaction D-cysteine + H2O = hydrogen sulfide + pyruvate + NH4(+) + H(+). In terms of biological role, catalyzes the alpha,beta-elimination reaction of D-cysteine and of several D-cysteine derivatives. It could be a defense mechanism against D-cysteine. The sequence is that of D-cysteine desulfhydrase from Serratia proteamaculans (strain 568).